A 219-amino-acid polypeptide reads, in one-letter code: tRNA (guanine-N(7)-)-methyltransferase (219 aa).

Residues glutamate 43, aspartate 68, glutamate 101, and asparagine 124 each coordinate S-adenosyl-L-methionine. Substrate-binding residues include lysine 128 and aspartate 160.

Belongs to the class I-like SAM-binding methyltransferase superfamily. TrmB family.

The catalysed reaction is guanosine(46) in tRNA + S-adenosyl-L-methionine = N(7)-methylguanosine(46) in tRNA + S-adenosyl-L-homocysteine. It functions in the pathway tRNA modification; N(7)-methylguanine-tRNA biosynthesis. Catalyzes the formation of N(7)-methylguanine at position 46 (m7G46) in tRNA. The polypeptide is tRNA (guanine-N(7)-)-methyltransferase (Clostridium beijerinckii (strain ATCC 51743 / NCIMB 8052) (Clostridium acetobutylicum)).